The sequence spans 397 residues: Phosphopentomutase (397 aa).

Asp10, Asp296, His301, Asp337, His338, and His349 together coordinate Mn(2+).

The protein belongs to the phosphopentomutase family. Mn(2+) is required as a cofactor.

It localises to the cytoplasm. It catalyses the reaction 2-deoxy-alpha-D-ribose 1-phosphate = 2-deoxy-D-ribose 5-phosphate. The enzyme catalyses alpha-D-ribose 1-phosphate = D-ribose 5-phosphate. It participates in carbohydrate degradation; 2-deoxy-D-ribose 1-phosphate degradation; D-glyceraldehyde 3-phosphate and acetaldehyde from 2-deoxy-alpha-D-ribose 1-phosphate: step 1/2. In terms of biological role, isomerase that catalyzes the conversion of deoxy-ribose 1-phosphate (dRib-1-P) and ribose 1-phosphate (Rib-1-P) to deoxy-ribose 5-phosphate (dRib-5-P) and ribose 5-phosphate (Rib-5-P), respectively. The polypeptide is Phosphopentomutase (Elusimicrobium minutum (strain Pei191)).